Reading from the N-terminus, the 283-residue chain is NAD kinase (283 aa).

The active-site Proton acceptor is Asp-66. NAD(+)-binding positions include 66-67, 140-141, Arg-151, Lys-168, Asp-170, 181-186, and Gln-240; these read DG, ND, and TGYCLS.

This sequence belongs to the NAD kinase family. A divalent metal cation is required as a cofactor.

The protein resides in the cytoplasm. The catalysed reaction is NAD(+) + ATP = ADP + NADP(+) + H(+). In terms of biological role, involved in the regulation of the intracellular balance of NAD and NADP, and is a key enzyme in the biosynthesis of NADP. Catalyzes specifically the phosphorylation on 2'-hydroxyl of the adenosine moiety of NAD to yield NADP. The chain is NAD kinase from Geobacter metallireducens (strain ATCC 53774 / DSM 7210 / GS-15).